The following is a 486-amino-acid chain: 2-hydroxymuconic semialdehyde dehydrogenase (486 aa).

Active-site residues include Glu-254 and Cys-288.

It belongs to the aldehyde dehydrogenase family.

It carries out the reaction (2Z,4E)-2-hydroxy-6-oxohexa-2,4-dienoate + NAD(+) + H2O = (2Z,4E)-2-hydroxyhexa-2,4-dienedioate + NADH + 2 H(+). The protein operates within aromatic compound metabolism; benzoate degradation via hydroxylation. Its function is as follows. 2-hydroxymuconic acid semialdehyde can be converted to 2-hydroxypent-2,4-dienoate either directly by the action of 2-hydroxymuconic semialdehyde hydrolase (HMSH) or by the action of three sequential enzymes, the first of which is HMSD. The protein is 2-hydroxymuconic semialdehyde dehydrogenase (dmpC) of Pseudomonas sp. (strain CF600).